The primary structure comprises 90 residues: MSNLRGTNRFILVAVLVSFVFLSIMNAEARKEIGYPKQRFGEDRTNPYEEITPPLIGGCDPKNPQTCLPKQPANPYRRGCLKITRCQRDV.

The signal sequence occupies residues 1 to 29 (MSNLRGTNRFILVAVLVSFVFLSIMNAEA). Cystine bridges form between Cys59-Cys67 and Cys80-Cys86.

It belongs to the plant rapid alkalinization factor (RALF) family.

The protein localises to the secreted. In terms of biological role, cell signaling peptide that may regulate plant stress, growth, and development. Mediates a rapid alkalinization of extracellular space by mediating a transient increase in the cytoplasmic Ca(2+) concentration leading to a calcium-dependent signaling events through a cell surface receptor and a concomitant activation of some intracellular mitogen-activated protein kinases. This chain is Protein RALF-like 3 (RALFL3), found in Arabidopsis thaliana (Mouse-ear cress).